The following is a 250-amino-acid chain: Mediator of RNA polymerase II transcription subunit 6 (250 aa).

The segment at 166 to 250 (KKREEEKKED…EPTARTTSKQ (85 aa)) is disordered. Acidic residues predominate over residues 204 to 223 (PAEDALEREEKEEVEEEEEE). The span at 224-239 (TLKTEEPTTSTDEPKF) shows a compositional bias: basic and acidic residues.

It belongs to the Mediator complex subunit 6 family. Component of the Mediator complex. Interacts with let-19/mdt-13. Interacts with RNA polymerase II. Interacts with mdt-28.

The protein localises to the nucleus. Component of the Mediator complex, a coactivator involved in the regulated transcription of nearly all RNA polymerase II-dependent genes. Mediator functions as a bridge to convey information from gene-specific regulatory proteins to the basal RNA polymerase II transcription machinery. Mediator is recruited to promoters by direct interactions with regulatory proteins and serves as a scaffold for the assembly of a functional preinitiation complex with RNA polymerase II and the general transcription factors. Acts to repress beta-catenin target genes. Required for asymmetric division of T-cells and for gonad and germ cell development. In Caenorhabditis elegans, this protein is Mediator of RNA polymerase II transcription subunit 6 (mdt-6).